Reading from the N-terminus, the 74-residue chain is Large ribosomal subunit protein bL27c (74 aa).

It belongs to the bacterial ribosomal protein bL27 family.

Its subcellular location is the plastid. The protein localises to the chloroplast. In Pleurochrysis haptonemofera (Unicellular marine alga), this protein is Large ribosomal subunit protein bL27c (rpl27).